The primary structure comprises 376 residues: GDSL esterase/lipase 2 (376 aa).

The first 25 residues, methionine 1–cysteine 25, serve as a signal peptide directing secretion. The N-linked (GlcNAc...) asparagine glycan is linked to asparagine 36. The active-site Nucleophile is serine 46. 2 N-linked (GlcNAc...) asparagine glycosylation sites follow: asparagine 186 and asparagine 205. Catalysis depends on residues aspartate 340 and histidine 343. An N-linked (GlcNAc...) asparagine glycan is attached at asparagine 362.

This sequence belongs to the 'GDSL' lipolytic enzyme family. As to expression, expressed seedlings, roots and stems.

The protein localises to the secreted. Involved in the resistance to the necrotropic bacteria Erwinia carotovora, probably via negative regulation of auxin signaling. Possesses lipase and antimicrobial activities, inhibiting germination of fungal spores (e.g. Alternaria brassicicola). The polypeptide is GDSL esterase/lipase 2 (GLIP2) (Arabidopsis thaliana (Mouse-ear cress)).